Reading from the N-terminus, the 607-residue chain is TOM1-like protein 8 (607 aa).

Residues 9 to 138 (ATSDMLIGPD…ELLRAGIVFP (130 aa)) form the VHS domain. The disordered stretch occupies residues 141–175 (PQITPSSGQNGPSTRYPQNSRNARQEAIDTSTESE). The GAT domain occupies 175 to 263 (EFPTLSLTEI…LLAKHEAIAS (89 aa)). Position 297 is a phosphoserine (Ser-297). The span at 355–379 (NNCESSTPTSNPHANHQKVQQNYSN) shows a compositional bias: polar residues. Disordered regions lie at residues 355-393 (NNCESSTPTSNPHANHQKVQQNYSNGFGPGHQEQSYYGQ), 407-460 (QPSS…SPTH), and 555-582 (DNGNNNTNPYQVSSHQPPPMMKPMNKKP). Ser-410 is subject to Phosphoserine. A compositionally biased stretch (low complexity) spans 448-460 (QSPSSSPQYSPTH). The segment covering 555–569 (DNGNNNTNPYQVSSH) has biased composition (polar residues).

This sequence belongs to the TOM1 family. In terms of tissue distribution, specifically expressed in siliques and flowers.

It is found in the membrane. Might contribute to the loading of the ESCRT machinery. The polypeptide is TOM1-like protein 8 (Arabidopsis thaliana (Mouse-ear cress)).